The chain runs to 1603 residues: Vitellogenin-4 (1603 aa).

Residues 1–15 (MKSIIIASLVALAIA) form the signal peptide. Residues 24–685 (FSPKSEYVYK…EKNAFLPKEV (662 aa)) enclose the Vitellogenin domain. An N-linked (GlcNAc...) asparagine glycan is attached at Asn-1266. Residues 1306-1475 (ATCKVDQSEV…SYLLKNEECE (170 aa)) enclose the VWFD domain. 2 cysteine pairs are disulfide-bonded: Cys-1308–Cys-1438 and Cys-1330–Cys-1474.

In terms of tissue distribution, expressed in the intestine of adult hermaphrodites.

The protein localises to the secreted. Its function is as follows. Precursor of the egg-yolk proteins that are sources of nutrients during embryonic development. Together with other vitellogenins, may play a role in modulating life-span, acting via induction of autophagy and lysosomal lipolysis. This Caenorhabditis elegans protein is Vitellogenin-4 (vit-4).